An 872-amino-acid chain; its full sequence is Alanine--tRNA ligase (872 aa).

Positions 567, 571, 669, and 673 each coordinate Zn(2+).

This sequence belongs to the class-II aminoacyl-tRNA synthetase family. Zn(2+) is required as a cofactor.

It is found in the cytoplasm. It carries out the reaction tRNA(Ala) + L-alanine + ATP = L-alanyl-tRNA(Ala) + AMP + diphosphate. Catalyzes the attachment of alanine to tRNA(Ala) in a two-step reaction: alanine is first activated by ATP to form Ala-AMP and then transferred to the acceptor end of tRNA(Ala). Also edits incorrectly charged Ser-tRNA(Ala) and Gly-tRNA(Ala) via its editing domain. The sequence is that of Alanine--tRNA ligase from Streptococcus sanguinis (strain SK36).